The sequence spans 2837 residues: Bifunctional DNA-directed RNA polymerase subunit beta-beta' (2837 aa).

The DNA-directed RNA polymerase subunit beta stretch occupies residues 1-1433; the sequence is MVDSSYMYAS…CLNVDLKQND (1433 aa). The interval 1436–2837 is DNA-directed RNA polymerase subunit beta'; the sequence is IEDISHTNIA…ESVVAYDQSN (1402 aa). Residues Cys1501, Cys1503, Cys1516, and Cys1519 each contribute to the Zn(2+) site. Asp1893, Asp1895, and Asp1897 together coordinate Mg(2+). Cys2235, Cys2309, Cys2316, and Cys2319 together coordinate Zn(2+).

The protein in the N-terminal section; belongs to the RNA polymerase beta chain family. This sequence in the C-terminal section; belongs to the RNA polymerase beta' chain family. As to quaternary structure, the RNAP catalytic core consists of 2 alpha, 1 beta/beta' and 1 omega subunit. When a sigma factor is associated with the core the holoenzyme is formed, which can initiate transcription. It depends on Mg(2+) as a cofactor. Zn(2+) is required as a cofactor.

The enzyme catalyses RNA(n) + a ribonucleoside 5'-triphosphate = RNA(n+1) + diphosphate. In terms of biological role, DNA-dependent RNA polymerase catalyzes the transcription of DNA into RNA using the four ribonucleoside triphosphates as substrates. The sequence is that of Bifunctional DNA-directed RNA polymerase subunit beta-beta' (rpoBC) from Wolbachia pipientis wMel.